The following is a 441-amino-acid chain: Adenylyltransferase and sulfurtransferase MOCS3 (441 aa).

ATP contacts are provided by residues Gly-83, Asp-104, 111–115, Lys-128, and 172–173; these read TNLHR and DN. Residues Cys-213 and Cys-216 each coordinate Zn(2+). Cys-230 acts as the Glycyl thioester intermediate; for adenylyltransferase activity in catalysis. Residues Cys-288 and Cys-291 each coordinate Zn(2+). The Rhodanese domain occupies 339–439; the sequence is AGRDHLLVDV…WTKTIDPNFP (101 aa). Cys-395 acts as the Cysteine persulfide intermediate; for sulfurtransferase activity in catalysis.

The protein in the N-terminal section; belongs to the HesA/MoeB/ThiF family. UBA4 subfamily. Zn(2+) is required as a cofactor.

Its subcellular location is the cytoplasm. It carries out the reaction [molybdopterin-synthase sulfur-carrier protein]-C-terminal Gly-Gly + ATP + H(+) = [molybdopterin-synthase sulfur-carrier protein]-C-terminal Gly-Gly-AMP + diphosphate. It catalyses the reaction [molybdopterin-synthase sulfur-carrier protein]-C-terminal Gly-Gly-AMP + S-sulfanyl-L-cysteinyl-[cysteine desulfurase] + AH2 = [molybdopterin-synthase sulfur-carrier protein]-C-terminal-Gly-aminoethanethioate + L-cysteinyl-[cysteine desulfurase] + A + AMP + 2 H(+). Its pathway is tRNA modification; 5-methoxycarbonylmethyl-2-thiouridine-tRNA biosynthesis. It functions in the pathway cofactor biosynthesis; molybdopterin biosynthesis. Its function is as follows. Plays a central role in 2-thiolation of mcm(5)S(2)U at tRNA wobble positions of cytosolic tRNA(Lys), tRNA(Glu) and tRNA(Gln). Also essential during biosynthesis of the molybdenum cofactor. Acts by mediating the C-terminal thiocarboxylation of sulfur carriers URM1 and MOCS2A. Its N-terminus first activates URM1 and MOCS2A as acyl-adenylates (-COAMP), then the persulfide sulfur on the catalytic cysteine is transferred to URM1 and MOCS2A to form thiocarboxylation (-COSH) of their C-terminus. The reaction probably involves hydrogen sulfide that is generated from the persulfide intermediate and that acts as a nucleophile towards URM1 and MOCS2A. Subsequently, a transient disulfide bond is formed. Does not use thiosulfate as sulfur donor; NFS1 probably acting as a sulfur donor for thiocarboxylation reactions. The polypeptide is Adenylyltransferase and sulfurtransferase MOCS3 (Anopheles gambiae (African malaria mosquito)).